The primary structure comprises 339 residues: Lipoate--protein ligase (339 aa).

The BPL/LPL catalytic domain occupies 31–221; that stretch reads FLDDDILFPY…QLLQIETISQ (191 aa). Residues R73, 78–81, K135, and A139 contribute to the ATP site; that span reads GAVY. A (R)-lipoate-binding site is contributed by K135.

The protein belongs to the LplA family.

It carries out the reaction L-lysyl-[lipoyl-carrier protein] + (R)-lipoate + ATP = N(6)-[(R)-lipoyl]-L-lysyl-[lipoyl-carrier protein] + AMP + diphosphate + H(+). Its pathway is protein modification; protein lipoylation via exogenous pathway; protein N(6)-(lipoyl)lysine from lipoate: step 1/2. It functions in the pathway protein modification; protein lipoylation via exogenous pathway; protein N(6)-(lipoyl)lysine from lipoate: step 2/2. In terms of biological role, catalyzes specifically the lipoylation of GcvH-L (SpyM50867), likely via the ATP-dependent activation of lipoate to lipoyl-AMP and the transfer of the activated lipoyl onto the lipoyl domain of the target protein. In Streptococcus pyogenes serotype M5 (strain Manfredo), this protein is Lipoate--protein ligase.